Here is a 339-residue protein sequence, read N- to C-terminus: Anthranilate phosphoribosyltransferase (339 aa).

Residues Gly-80, 83–84, Thr-88, 90–93, 108–116, and Ser-120 contribute to the 5-phospho-alpha-D-ribose 1-diphosphate site; these read GD, NIST, and KHGNRSVSS. Anthranilate is bound at residue Gly-80. Ser-92 lines the Mg(2+) pocket. Asn-111 contacts anthranilate. Arg-166 contacts anthranilate. Residues Asp-225 and Glu-226 each coordinate Mg(2+).

This sequence belongs to the anthranilate phosphoribosyltransferase family. In terms of assembly, homodimer. Mg(2+) is required as a cofactor.

The catalysed reaction is N-(5-phospho-beta-D-ribosyl)anthranilate + diphosphate = 5-phospho-alpha-D-ribose 1-diphosphate + anthranilate. It functions in the pathway amino-acid biosynthesis; L-tryptophan biosynthesis; L-tryptophan from chorismate: step 2/5. Functionally, catalyzes the transfer of the phosphoribosyl group of 5-phosphorylribose-1-pyrophosphate (PRPP) to anthranilate to yield N-(5'-phosphoribosyl)-anthranilate (PRA). This chain is Anthranilate phosphoribosyltransferase, found in Alkaliphilus metalliredigens (strain QYMF).